The chain runs to 121 residues: NADH-quinone oxidoreductase subunit A (121 aa).

The next 3 helical transmembrane spans lie at Tyr8 to Gly28, Leu65 to Ile85, and Gln93 to Ile113.

The protein belongs to the complex I subunit 3 family. In terms of assembly, NDH-1 is composed of 14 different subunits. Subunits NuoA, H, J, K, L, M, N constitute the membrane sector of the complex.

It is found in the cell inner membrane. The catalysed reaction is a quinone + NADH + 5 H(+)(in) = a quinol + NAD(+) + 4 H(+)(out). In terms of biological role, NDH-1 shuttles electrons from NADH, via FMN and iron-sulfur (Fe-S) centers, to quinones in the respiratory chain. The immediate electron acceptor for the enzyme in this species is believed to be a menaquinone. Couples the redox reaction to proton translocation (for every two electrons transferred, four hydrogen ions are translocated across the cytoplasmic membrane), and thus conserves the redox energy in a proton gradient. The chain is NADH-quinone oxidoreductase subunit A from Flavobacterium psychrophilum (strain ATCC 49511 / DSM 21280 / CIP 103535 / JIP02/86).